We begin with the raw amino-acid sequence, 240 residues long: Coat protein (240 aa).

Positions 1–10 (MATPSTQTTD) are enriched in polar residues. The segment at 1–27 (MATPSTQTTDPKPANADLSDPNRAPSL) is disordered.

Belongs to the potexvirus capsid protein family.

The protein resides in the virion. Functionally, required for genome encapsidation. Forms ribonucleoprotein complexes along with TGB1 helicase and viral RNA. The sequence is that of Coat protein from Narcissus pseudonarcissus (Daffodil).